The primary structure comprises 393 residues: MSVMNGREVARESRDAQVFEFGTAPGSAVVKIPVQGGPIGGIAISRDGSLLVVTNNGTDTVSVVGTDTCRVTQTVTSVNEPFAIAMGNAEANRAYVSTVSSAYDAIAVIDVATNTVLGTHPLALSVSDLTLSPDDKYLYVSRNGTRGADVAVLDTTTGALIDVVDVSQAPGTTTQCVRMSPDGSVLYVGANGPSGGLLVVITTRAQSDGGRIGSRSRSRQKSSKPRGNQAAAGLRVVATIDIGSSVRDVALSPDGAIAYVASCGSDFGAVVDVIDTRTHQITSSRAISEIGGLVTRVSVSGDADRAYLVSEDRVTVLCTRTHDVIGTIRTGQPSCVVESPDGKYLYIADYSGTITRTAVASTIVSGTEQLALQRRGSMQWFSPELQQYAPALA.

The disordered stretch occupies residues 208-230 (DGGRIGSRSRSRQKSSKPRGNQA). Basic residues predominate over residues 214–224 (SRSRSRQKSSK).

Its function is as follows. May play an important role in host-pathogen interactions and in ESAT-6 secretion. The sequence is that of Seven-bladed beta-propeller protein Rv1057 from Mycobacterium tuberculosis (strain ATCC 25618 / H37Rv).